The primary structure comprises 1005 residues: PDZ domain-containing protein 7 (1005 aa).

PDZ domains follow at residues 86 to 168 (SVRV…RMGR) and 210 to 293 (IVHL…ETGR). Disordered stretches follow at residues 353–378 (PEEPGSRGPGWGRADTAMQTEPDAGG), 700–859 (VSPS…KTPS), and 949–1005 (VRVP…ARLL). Residues 770-786 (AQSRSRSRSRSRSRSRS) show a composition bias toward basic residues. Residues 787–799 (SRGQGKSPGRRSP) show a composition bias toward low complexity. Positions 989-998 (PEPPTNPQTP) are enriched in pro residues.

As to quaternary structure, homodimerizes (via PDZ2 domain). Component of USH2 complex, composed of ADGRV1, PDZD7, USH2A and WHRN. Interacts (via PDZ domains) with WHRN; the interaction is direct. Interacts with USH1G. Interacts with ADGRV1 (via the cytoplasmic region). Interacts with USH2A (via the cytoplasmic region). Interacts with MYO7A (via MyTH4-FERM domains).

It is found in the cell projection. The protein localises to the cilium. It localises to the nucleus. The protein resides in the stereocilium. In terms of biological role, in cochlear developing hair cells, essential in organizing the USH2 complex at stereocilia ankle links. Blocks inhibition of adenylate cyclase activity mediated by ADGRV1. In Pongo abelii (Sumatran orangutan), this protein is PDZ domain-containing protein 7 (PDZD7).